A 373-amino-acid chain; its full sequence is Arabinonate dehydratase (373 aa).

Mg(2+) contacts are provided by aspartate 199, glutamate 225, and glutamate 251.

It belongs to the mandelate racemase/muconate lactonizing enzyme family. In terms of assembly, homooctamer. The cofactor is Mg(2+).

The catalysed reaction is D-arabinonate = 2-dehydro-3-deoxy-D-arabinonate + H2O. Inhibited by substrate levels above 8 mM. Catalyzes the dehydration of D-arabinonate to 2-keto-3-deoxy-D-arabinonate. Participates in a pentose oxidation pathway that converts D-arabinonate to 2-oxoglutarate. This chain is Arabinonate dehydratase, found in Saccharolobus solfataricus (strain ATCC 35092 / DSM 1617 / JCM 11322 / P2) (Sulfolobus solfataricus).